The sequence spans 298 residues: tRNA pseudouridine synthase B (298 aa).

The active-site Nucleophile is the D46.

The protein belongs to the pseudouridine synthase TruB family. Type 1 subfamily.

The catalysed reaction is uridine(55) in tRNA = pseudouridine(55) in tRNA. In terms of biological role, responsible for synthesis of pseudouridine from uracil-55 in the psi GC loop of transfer RNAs. The protein is tRNA pseudouridine synthase B of Paracoccus denitrificans (strain Pd 1222).